Reading from the N-terminus, the 149-residue chain is Nucleoside diphosphate kinase (149 aa).

The ATP site is built by Lys-9, Phe-57, Arg-85, Thr-91, Arg-102, and Asn-112. His-115 serves as the catalytic Pros-phosphohistidine intermediate.

This sequence belongs to the NDK family. As to quaternary structure, homotetramer. Mg(2+) is required as a cofactor.

It localises to the cytoplasm. The enzyme catalyses a 2'-deoxyribonucleoside 5'-diphosphate + ATP = a 2'-deoxyribonucleoside 5'-triphosphate + ADP. It carries out the reaction a ribonucleoside 5'-diphosphate + ATP = a ribonucleoside 5'-triphosphate + ADP. Functionally, major role in the synthesis of nucleoside triphosphates other than ATP. The ATP gamma phosphate is transferred to the NDP beta phosphate via a ping-pong mechanism, using a phosphorylated active-site intermediate. The chain is Nucleoside diphosphate kinase from Nostoc sp. (strain PCC 7120 / SAG 25.82 / UTEX 2576).